We begin with the raw amino-acid sequence, 201 residues long: Glutathione S-transferase GstA (201 aa).

Positions Met1–Gln81 constitute a GST N-terminal domain. Glutathione-binding positions include Cys10, Lys35, Val52, Glu65 to Gly66, Asn99, and Thr103 to His106. The region spanning Asn87–Lys201 is the GST C-terminal domain.

It belongs to the GST superfamily. Beta family. Homodimer.

The protein localises to the cytoplasm. It catalyses the reaction RX + glutathione = an S-substituted glutathione + a halide anion + H(+). Conjugation of reduced glutathione to a wide number of exogenous and endogenous hydrophobic electrophiles. This is Glutathione S-transferase GstA (gstA) from Escherichia coli O157:H7.